Reading from the N-terminus, the 1966-residue chain is Histone-lysine N-methyltransferase SETD1B (1966 aa).

Residues 1-12 (MENSHPPHHHHQ) show a composition bias toward basic residues. The interval 1–26 (MENSHPPHHHHQQPPPQPGPSGERRN) is disordered. Residues 68-98 (VEDPRVVGIWTKNKELELSVPKFKIDEFYVG) form an interaction with WDR82 region. The RRM domain occupies 93 to 181 (DEFYVGPVPP…NIIHVELDTK (89 aa)). Disordered regions lie at residues 235-302 (GCGS…LFSQ), 357-660 (VGGT…PKPM), 675-719 (LAPT…PPPA), 963-1462 (KVKR…SGPL), 1501-1541 (PPLL…RPPA), 1555-1606 (QPQT…KLPF), and 1636-1668 (AKSR…PQPL). Polar residues-rich tracts occupy residues 243–259 (VTPN…TAYS), 265–274 (TPNSYGQGTP), and 282–300 (PFSQ…SYLF). Composition is skewed to pro residues over residues 432–441 (PAPPPLPPAE) and 449–458 (GTPPGPPPPD). The segment covering 493–521 (EKPHDSLDSRIEMLLKEQRTKLLFLREPD) has biased composition (basic and acidic residues). The segment covering 531-543 (SPISSSSSQLSPL) has biased composition (low complexity). The span at 592–603 (PRPPPEPGPPDP) shows a compositional bias: pro residues. Over residues 637–646 (EDMEISDDEM) the composition is skewed to acidic residues. The segment covering 679–719 (LPLPPPPGFPPLPPPPPPPPPQPGFPMPPPLPPPPPPPPPA) has biased composition (pro residues). Serine 986 and serine 994 each carry phosphoserine. Basic and acidic residues predominate over residues 995 to 1015 (ERERDRDMADTPCELAKRDPK). A Phosphoserine modification is found at serine 1031. Residues 1041–1064 (LSASSSSSASSSSGSSTTSPSSSA) show a composition bias toward low complexity. Composition is skewed to acidic residues over residues 1067 to 1087 (KEEE…EEEE) and 1104 to 1142 (KDDD…EEET). Residues 1148–1174 (SKAEATSSSESSESSEFESSSESSPSS) are compositionally biased toward low complexity. The stretch at 1173–1204 (SSSEDEEEVVAREEEEEEEEEEMVAEESMASA) forms a coiled coil. Acidic residues-rich tracts occupy residues 1175–1197 (SEDE…EMVA) and 1229–1238 (GMEEEVDIET). Phosphoserine occurs at positions 1265, 1283, and 1335. Residues 1312 to 1340 (EPPMMLPLPLQPPLPPPRPPRPPSPPPEP) show a composition bias toward pro residues. A compositionally biased stretch (low complexity) spans 1383-1425 (PGGEPPLSGGSSGLSLSSPQVPGSPFSYPAPSPSLSSGGLPRT). The span at 1501–1514 (PPLLPAPLASCPPP) shows a compositional bias: pro residues. The segment covering 1515–1524 (MKRKPGRPRR) has biased composition (basic residues). The span at 1580–1600 (PAPPPPLPPQPPPPPPPPPVE) shows a compositional bias: pro residues. Phosphoserine is present on residues serine 1659 and serine 1663. The WDR5 interaction motif (WIN) motif lies at 1745–1750 (GCARSE). Positions 1767–1800 (SRASTDEPPADTQGMSIPAQPHASTRAGSERRSE) are disordered. Positions 1798 to 1803 (RSEQRR) match the RxxxRR motif motif. The SET domain occupies 1827–1944 (KKLKFCKSHI…VNEEITYDYK (118 aa)). Residue tyrosine 1943 coordinates S-adenosyl-L-methionine. Positions 1950–1966 (VKIPCLCGSENCRGTLN) constitute a Post-SET domain.

The protein belongs to the class V-like SAM-binding methyltransferase superfamily. As to quaternary structure, component of the SET1B/COMPASS complex composed of the catalytic subunit SETD1B, WDR5, WDR82, RBBP5, ASH2L/ASH2, CXXC1/CFP1, HCFC1, DPY30 homotrimer and BOD1. Forms a core complex with the evolutionary conserved subcomplex WRAD composed of WDR5, RBBP5, ASH2L/ASH2 and DPY30 subunits; WRAD differentially stimulates the methyltransferase activity. Interacts with HCFC1 and ASH2L/ASH2. Interacts (via N-terminal region) with WDR82. Interacts (via the RRM domain) with hyperphosphorylated C-terminal domain (CTD) of RNA polymerase II large subunit (POLR2A) only in the presence of WDR82. Binds specifically to CTD heptad repeats phosphorylated on 'Ser-5' of each heptad. Interacts with RBM15. Interacts (via WIN motif) with WDR5.

The protein resides in the nucleus. Its subcellular location is the nucleus speckle. It is found in the chromosome. The protein localises to the cytoplasm. The catalysed reaction is L-lysyl(4)-[histone H3] + S-adenosyl-L-methionine = N(6)-methyl-L-lysyl(4)-[histone H3] + S-adenosyl-L-homocysteine + H(+). The enzyme catalyses N(6)-methyl-L-lysyl(4)-[histone H3] + S-adenosyl-L-methionine = N(6),N(6)-dimethyl-L-lysyl(4)-[histone H3] + S-adenosyl-L-homocysteine + H(+). It carries out the reaction N(6),N(6)-dimethyl-L-lysyl(4)-[histone H3] + S-adenosyl-L-methionine = N(6),N(6),N(6)-trimethyl-L-lysyl(4)-[histone H3] + S-adenosyl-L-homocysteine + H(+). Its function is as follows. Histone methyltransferase that catalyzes methyl group transfer from S-adenosyl-L-methionine to the epsilon-amino group of 'Lys-4' of histone H3 (H3K4) via a non-processive mechanism. Part of chromatin remodeling machinery, forms H3K4me1, H3K4me2 and H3K4me3 methylation marks at active chromatin sites where transcription and DNA repair take place. Plays an essential role in regulating the transcriptional programming of multipotent hematopoietic progenitor cells and lymphoid lineage specification during hematopoiesis. In Homo sapiens (Human), this protein is Histone-lysine N-methyltransferase SETD1B (SETD1B).